Reading from the N-terminus, the 775-residue chain is Melanoma-associated antigen D1 (775 aa).

The tract at residues serine 37–glutamine 330 is disordered. Residues alanine 39–serine 50 are compositionally biased toward low complexity. Polar residues-rich tracts occupy residues proline 52–threonine 63, lysine 84–arginine 100, glycine 150–lysine 180, alanine 223–serine 237, asparagine 250–glycine 260, and leucine 297–glutamine 330. 19 repeat units span residues tryptophan 293–alanine 298, tryptophan 299–glycine 304, tryptophan 305–alanine 310, tryptophan 329–alanine 334, tryptophan 335–isoleucine 340, tryptophan 341–isoleucine 346, tryptophan 347–isoleucine 352, tryptophan 353–valine 358, tryptophan 359–valine 364, tryptophan 365–alanine 370, tryptophan 371–glycine 376, tryptophan 377–serine 382, tryptophan 383–serine 388, tryptophan 389–aspartate 394, tryptophan 395–aspartate 400, tryptophan 401–aspartate 406, tryptophan 407–aspartate 412, tryptophan 413–aspartate 418, and tryptophan 419–aspartate 424. Residues tryptophan 293 to proline 441 form a 22 X 6 AA tandem repeats of W-[PQ]-X-P-X-X region. A disordered region spans residues threonine 374–tryptophan 407. Residues proline 375–aspartate 406 are compositionally biased toward low complexity. The 20; approximate repeat unit spans residues tryptophan 425 to aspartate 429. 2 repeat units span residues tryptophan 430–aspartate 435 and tryptophan 436–proline 441. Residues glutamine 437–arginine 452 show a composition bias toward low complexity. Positions glutamine 437 to arginine 463 are disordered. Residues leucine 468 to alanine 666 form the MAGE domain.

In terms of assembly, interacts with DLX5, DLX7 and MSX2 and forms homomultimers. Interacts with UNC5A. Interacts with TRIM28 and PJA1. Interacts with NGFR/p75NTR and RORA. Ubiquitous and in the seminiferous tubules expressed in Sertoli cells but not in germ cells. Expression decreases in all tissues with increased age and is detectable only in brain cortex and lung.

It localises to the cytoplasm. The protein resides in the cell membrane. Its subcellular location is the nucleus. In terms of biological role, involved in the apoptotic response after nerve growth factor (NGF) binding in neuronal cells. Inhibits cell cycle progression, and facilitates NGFR-mediated apoptosis. May act as a regulator of the function of DLX family members. May enhance ubiquitin ligase activity of RING-type zinc finger-containing E3 ubiquitin-protein ligases. Proposed to act through recruitment and/or stabilization of the Ubl-conjugating enzyme (E2) at the E3:substrate complex. Plays a role in the circadian rhythm regulation. May act as RORA co-regulator, modulating the expression of core clock genes such as BMAL1 and NFIL3, induced, or NR1D1, repressed. The chain is Melanoma-associated antigen D1 (Maged1) from Rattus norvegicus (Rat).